A 396-amino-acid polypeptide reads, in one-letter code: NADH-quinone oxidoreductase subunit D 1 (396 aa).

This sequence belongs to the complex I 49 kDa subunit family. In terms of assembly, NDH-1 is composed of 14 different subunits. Subunits NuoB, C, D, E, F, and G constitute the peripheral sector of the complex.

The protein localises to the cell inner membrane. The catalysed reaction is a quinone + NADH + 5 H(+)(in) = a quinol + NAD(+) + 4 H(+)(out). Functionally, NDH-1 shuttles electrons from NADH, via FMN and iron-sulfur (Fe-S) centers, to quinones in the respiratory chain. The immediate electron acceptor for the enzyme in this species is believed to be ubiquinone. Couples the redox reaction to proton translocation (for every two electrons transferred, four hydrogen ions are translocated across the cytoplasmic membrane), and thus conserves the redox energy in a proton gradient. This is NADH-quinone oxidoreductase subunit D 1 from Nitrobacter hamburgensis (strain DSM 10229 / NCIMB 13809 / X14).